A 782-amino-acid chain; its full sequence is Protein phosphatase 1 regulatory subunit 12C (782 aa).

Residues 1–17 (MSGEDGPAAGPGAAAAA) show a composition bias toward low complexity. The disordered stretch occupies residues 1–43 (MSGEDGPAAGPGAAAAAARERRREQLRQWGARAGAEPGPGERR). The residue at position 2 (serine 2) is an N-acetylserine. 4 ANK repeats span residues 100–129 (DGISALHQACIDENLEVVRFLVEQGATVNQ), 133–162 (EGWTPLHVAASCGYLDIARYLLSHGANIAA), 226–255 (TGASALHVAAAKGYIEVMRLLLQAGYDPEL), and 259–288 (DGWTPLHAAAHWGVEDACRLLAEHGGGMDS). Residues 297 to 329 (CDLADEEVLSLLEELARKQEDLRNQKEASQSRG) adopt a coiled-coil conformation. Residues 316–686 (EDLRNQKEAS…EEPDGGFRTL (371 aa)) are disordered. Polar residues predominate over residues 323–337 (EASQSRGQEPQAPSS). Residues 349-365 (SSREKISLQDLSKERRP) show a composition bias toward basic and acidic residues. Residues 374-383 (QDEDEGEEGP) are compositionally biased toward acidic residues. A phosphoserine mark is found at serine 399, serine 407, serine 427, serine 452, and serine 509. A compositionally biased stretch (polar residues) spans 449–463 (RSASSSWLEGTSTQA). Positions 537 to 546 (VRDEESESQR) are enriched in basic and acidic residues. Residues 547 to 557 (KARSRLMRQSR) are compositionally biased toward basic residues. Threonine 560 is modified (phosphothreonine; by CDC42BP and ROCK2). Residues 567–583 (DLKEAEKAAGKAPESEK) are compositionally biased toward basic and acidic residues. Residues serine 604 and serine 647 each carry the phosphoserine modification. A compositionally biased stretch (acidic residues) spans 670–680 (PEPEPESEEPD). The stretch at 681 to 782 (GGFRTLYAEL…LIRVISKLSK (102 aa)) forms a coiled coil.

As to quaternary structure, PP1 comprises a catalytic subunit, PPP1CA, PPP1CB or PPP1CC, and one or several targeting or regulatory subunits. PPP1R12C mediates binding to myosin. Interacts via its N-terminus with PPP1CB. Interacts with IL16. Interacts with the coiled-coil domain of MPRIP. Interacts with NOD2. In terms of processing, phosphorylation at Thr-560 is essential for its interaction with PPP1CB. In terms of tissue distribution, ubiquitously expressed. Highly expressed in heart.

The protein resides in the cytoplasm. It localises to the cytoskeleton. Its subcellular location is the stress fiber. Functionally, regulates myosin phosphatase activity. This chain is Protein phosphatase 1 regulatory subunit 12C, found in Homo sapiens (Human).